A 598-amino-acid chain; its full sequence is Pescadillo homolog (598 aa).

The interval 296 to 317 (QAMKADSKDKDDNSNDEAPENV) is disordered. In terms of domain architecture, BRCT spans 345-439 (PTATLFEDFV…ELLSANLYLP (95 aa)). Disordered regions lie at residues 452–501 (DALG…EDVE), 515–544 (GIAY…EDEE), and 564–598 (MKYS…VEKK). Positions 463–485 (ESEDESSDSSEESDSEIENEEED) are enriched in acidic residues. Basic and acidic residues-rich tracts occupy residues 520-532 (KAKD…DVAS), 570-579 (QKEDKIEELK), and 586-598 (AKKE…VEKK). The stretch at 557–598 (QRKLYKKMKYSNQQKEDKIEELKKKKKQLAKKEKTLKKVEKK) forms a coiled coil.

The protein belongs to the pescadillo family. Component of the NOP7 complex, composed of ERB1, NOP7 and YTM1. The complex is held together by ERB1, which interacts with NOP7 via its N-terminal domain and with YTM1 via a high-affinity interaction between the seven-bladed beta-propeller domains of the 2 proteins. The NOP7 complex associates with the 66S pre-ribosome.

It is found in the nucleus. Its subcellular location is the nucleolus. The protein localises to the nucleoplasm. Its function is as follows. Component of the NOP7 complex, which is required for maturation of the 25S and 5.8S ribosomal RNAs and formation of the 60S ribosome. The sequence is that of Pescadillo homolog from Candida glabrata (strain ATCC 2001 / BCRC 20586 / JCM 3761 / NBRC 0622 / NRRL Y-65 / CBS 138) (Yeast).